We begin with the raw amino-acid sequence, 87 residues long: Toxin ICK-41 (87 aa).

Positions 1–19 (MKPIVYMLLFCAFTVVILG) are cleaved as a signal peptide. Intrachain disulfides connect C40/C54, C40/C77, C53/C66, and C80/C87.

It belongs to the neurotoxin 27 (Jztx-72) family. ICK-41 subfamily. In terms of tissue distribution, expressed by the venom gland.

The protein localises to the secreted. Probable neurotoxin with ion channel impairing activity. The polypeptide is Toxin ICK-41 (Trittame loki (Brush-footed trapdoor spider)).